The following is a 427-amino-acid chain: Probable transcription factor At5g28040 (427 aa).

Positions 1–81 are disordered; sequence MASDQRDTDF…APATKSSSGT (81 aa). S14 carries the post-translational modification Phosphoserine. Gly residues predominate over residues 22–32; the sequence is GGGGGGRGGGE. A compositionally biased stretch (acidic residues) spans 33 to 62; it reads TESDEDVVIPEPNEAEDDDHDPDPDPEYED.

The protein belongs to the GeBP family.

In Arabidopsis thaliana (Mouse-ear cress), this protein is Probable transcription factor At5g28040.